A 441-amino-acid chain; its full sequence is Eukaryotic translation initiation factor 3 subunit E (441 aa).

The PCI domain occupies 223–407 (IFFNHDNGRT…GTVIMEPTQP (185 aa)).

It belongs to the eIF-3 subunit E family. Component of the eukaryotic translation initiation factor 3 (eIF-3) complex (Potential). Binds to the translation initiation factors TIF3F1 and TIF3H1. Associates with the CSN (COP9 signalosome) complex. Interacts directly with CSN1, CSN4, CSN6A, CSN6B, CSN7, CSN8 and TIF3C1. Binds to 40S small ribosomal subunit S9 (RPS9B and RPS9C) via its N-terminal part. Interacts with the 26S proteasome subunit RPN12a via its C-terminal part. Also binds with At1g27930 and At4g30620.

The protein localises to the cytoplasm. The protein resides in the nucleus. In terms of biological role, component of the eukaryotic translation initiation factor 3 (eIF-3) complex, which is involved in protein synthesis of a specialized repertoire of mRNAs and, together with other initiation factors, stimulates binding of mRNA and methionyl-tRNAi to the 40S ribosome. The eIF-3 complex specifically targets and initiates translation of a subset of mRNAs involved in cell proliferation (Potential). Negatively regulates translation during flower development. The sequence is that of Eukaryotic translation initiation factor 3 subunit E from Arabidopsis thaliana (Mouse-ear cress).